The primary structure comprises 132 residues: Venom CUB domain-containing protein 2 (132 aa).

Positions 1–17 (MKTLFLAIALFSAVALA) are cleaved as a signal peptide. The CUB domain maps to 22 to 129 (ESAELVPGGE…RGFVACKATA (108 aa)). 2 cysteine pairs are disulfide-bonded: Cys66–Cys125 and Cys77–Cys94.

This sequence belongs to the venom CUB family. As to expression, expressed by the venom gland (posterior main gland) (at protein level).

It is found in the secreted. This Platymeris rhadamanthus (Red spot assassin bug) protein is Venom CUB domain-containing protein 2.